We begin with the raw amino-acid sequence, 372 residues long: MKYDLIIIGSGSVGAAAGYYATRAGLNVLMTDAHMPPHQHGSHHGDTRLIRHAYGEGEKYVPLVLRAQTLWDELSRHNEDDPIFVRSGVINLGPADSAFLANVAHSAEQWQLNVEKLDAQGIMARWPEIRVPDNYIGLFETDSGFLRSELAIKTWIQLAKEAGCAQLFNCPVTAIRHDDDGVTIETADGEYQAKKAIVCAGTWVKDLLPELPVQPVRKVFAWYQADGRYSVKNKFPAFTGELPNGDQYYGFPAENDALKIGKHNGGQVIHSADERVPFAEVVSDGSEAFPFLRNVLPGIGCCLYGAACTYDNSPDEDFIIDTLPDHDNTLFITGLSGHGFKFASVLGEIAADFAQDKKSDFDLTPFRLSRFQ.

4 to 34 (DLIIIGSGSVGAAAGYYATRAGLNVLMTDAH) is a binding site for FAD. Position 308 is an S-8alpha-FAD cysteine (cysteine 308).

It belongs to the MSOX/MTOX family. MTOX subfamily. Monomer. It depends on FAD as a cofactor.

It carries out the reaction N(alpha)-methyl-L-tryptophan + O2 + H2O = L-tryptophan + formaldehyde + H2O2. In terms of biological role, catalyzes the oxidative demethylation of N-methyl-L-tryptophan. The chain is N-methyl-L-tryptophan oxidase from Escherichia coli O139:H28 (strain E24377A / ETEC).